The chain runs to 151 residues: Large ribosomal subunit protein bL9 (151 aa).

This sequence belongs to the bacterial ribosomal protein bL9 family.

Binds to the 23S rRNA. This is Large ribosomal subunit protein bL9 from Desulforapulum autotrophicum (strain ATCC 43914 / DSM 3382 / VKM B-1955 / HRM2) (Desulfobacterium autotrophicum).